A 153-amino-acid chain; its full sequence is Transcriptional repressor NrdR (153 aa).

Residues 3–34 (CPFCNNISTNVKDSRSIEDDMLIRRRRVCPVC) fold into a zinc finger. The 91-residue stretch at 49–139 (LMVIKKNGGL…VYMNFKNIND (91 aa)) folds into the ATP-cone domain.

Belongs to the NrdR family. Zn(2+) serves as cofactor.

Functionally, negatively regulates transcription of bacterial ribonucleotide reductase nrd genes and operons by binding to NrdR-boxes. In Ehrlichia ruminantium (strain Gardel), this protein is Transcriptional repressor NrdR.